Consider the following 428-residue polypeptide: Dihydroorotase (428 aa).

Positions 59 and 61 each coordinate Zn(2+). Substrate-binding positions include His-61–Arg-63 and Asn-93. Asp-151, His-178, and His-231 together coordinate Zn(2+). Asn-277 is a substrate binding site. Zn(2+) is bound at residue Asp-304. Residue Asp-304 is part of the active site. Substrate-binding positions include His-308 and Phe-322 to Gly-323.

The protein belongs to the metallo-dependent hydrolases superfamily. DHOase family. Class I DHOase subfamily. Zn(2+) serves as cofactor.

It carries out the reaction (S)-dihydroorotate + H2O = N-carbamoyl-L-aspartate + H(+). It functions in the pathway pyrimidine metabolism; UMP biosynthesis via de novo pathway; (S)-dihydroorotate from bicarbonate: step 3/3. Functionally, catalyzes the reversible cyclization of carbamoyl aspartate to dihydroorotate. The polypeptide is Dihydroorotase (Bacillus pumilus (strain SAFR-032)).